The following is a 492-amino-acid chain: RNA helicase CrhR (492 aa).

The Q motif motif lies at 7–35; the sequence is STFADLGLSEKRCQLLADIGFEAPTQIQT. The Helicase ATP-binding domain occupies 38–207; sequence IPLLLSGRDM…NQFLNDPALV (170 aa). An ATP-binding site is contributed by 51–58; sequence SQTGTGKT. The DEAD box motif lies at 155 to 158; it reads DEAD. In terms of domain architecture, Helicase C-terminal spans 234 to 379; it reads KALQPILEME…VCTIPNRSQV (146 aa). A disordered region spans residues 451-492; that stretch reads VLRRGRNAGGGQNKSGGGYQGKPGKPRRSSGGRRPAYSDRQQ. Residues 457-471 show a composition bias toward gly residues; it reads NAGGGQNKSGGGYQG.

This sequence belongs to the DEAD box helicase family.

The protein resides in the cytoplasm. Its subcellular location is the cell inner membrane. It is found in the cellular thylakoid membrane. The catalysed reaction is ATP + H2O = ADP + phosphate + H(+). With respect to regulation, helicase inhibited by the slowly-hydrolyzing ATP analog ATP-gamma-S. Protein is rapidly degraded upon shifting from 20 to 30 degrees Celsius, the degradation machinery is only transiently present in cells grown at 30 degrees Celsius, is inhibited by commercial protease inhibitors and requires full-length protein expression (the N-terminal fragment does not induce proteolysis although it can be degraded by wild-type extract). In terms of biological role, an ATP-dependent bidirectional RNA helicase with RNA-dependent ATPase activity; does not unwind dsDNA, uses only (d)ATP. Also has ATP-dependent RNA annealing activity; concurrent annealing and helicase activity promote strand-exchange activity. In vitro has low helicase processivity, annealing processivity is probably higher. Required for correct cold adaptation, probably by aiding translation of mRNAs required for photosynthesis and electron transport. Probably regulates the cold-shock-inducible expression of the GroESL chaperones. May partially regulate its own expression at both the transcriptional and post-transcriptional level (experiments used a construct expressing a 25 kDa trunacted protein which might have dominant-negative effects); is probably not directly involved in the pathway responsible for mRNA degradation. The chain is RNA helicase CrhR from Synechocystis sp. (strain ATCC 27184 / PCC 6803 / Kazusa).